We begin with the raw amino-acid sequence, 331 residues long: ADP-L-glycero-D-manno-heptose-6-epimerase (331 aa).

NADP(+)-binding positions include 11–12 (FI), 32–33 (DN), Lys-39, Lys-54, 75–79 (EGACS), and Asn-92. Tyr-139 (proton acceptor) is an active-site residue. Lys-143 contributes to the NADP(+) binding site. A substrate-binding site is contributed by Asn-168. NADP(+)-binding residues include Val-169 and Lys-177. The active-site Proton acceptor is the Lys-177. Residues Arg-179, His-186, 200-203 (FGEY), Arg-213, and Tyr-292 each bind substrate.

It belongs to the NAD(P)-dependent epimerase/dehydratase family. HldD subfamily. As to quaternary structure, homopentamer. NADP(+) is required as a cofactor.

The catalysed reaction is ADP-D-glycero-beta-D-manno-heptose = ADP-L-glycero-beta-D-manno-heptose. It participates in nucleotide-sugar biosynthesis; ADP-L-glycero-beta-D-manno-heptose biosynthesis; ADP-L-glycero-beta-D-manno-heptose from D-glycero-beta-D-manno-heptose 7-phosphate: step 4/4. Catalyzes the interconversion between ADP-D-glycero-beta-D-manno-heptose and ADP-L-glycero-beta-D-manno-heptose via an epimerization at carbon 6 of the heptose. The sequence is that of ADP-L-glycero-D-manno-heptose-6-epimerase from Ralstonia nicotianae (strain ATCC BAA-1114 / GMI1000) (Ralstonia solanacearum).